We begin with the raw amino-acid sequence, 199 residues long: Putative AgrB-like protein (199 aa).

The next 5 membrane-spanning stretches (helical) occupy residues 43-63 (IIIF…FSFI), 81-101 (YGCL…TRLF), 108-128 (FYIV…PCPN), 139-159 (LKIL…LSPL), and 165-185 (ILIS…KGVI).

The protein belongs to the AgrB family.

Its subcellular location is the cell membrane. In terms of biological role, may be involved in the proteolytic processing of a quorum sensing system signal molecule precursor. The protein is Putative AgrB-like protein (cfg02) of Clostridium beijerinckii (Clostridium MP).